Reading from the N-terminus, the 86-residue chain is Omega-theraphotoxin-Hhn1f 2 (86 aa).

A signal peptide spans 1 to 21; the sequence is MKSIVFVALFGLALLAVVCSA. The propeptide occupies 22–50; sequence SEDAHKELLKEVVRAVVVDKTDAVQAEER. Disulfide bonds link Cys-52–Cys-66, Cys-59–Cys-71, and Cys-65–Cys-78.

The protein belongs to the neurotoxin 10 (Hwtx-1) family. 17 (Hntx-9) subfamily. As to expression, expressed by the venom gland.

The protein localises to the secreted. In terms of biological role, ion channel inhibitor. The polypeptide is Omega-theraphotoxin-Hhn1f 2 (Cyriopagopus hainanus (Chinese bird spider)).